The following is a 485-amino-acid chain: NADH-quinone oxidoreductase subunit N (485 aa).

The next 14 helical transmembrane spans lie at 10–30 (AMLPLLIVGLTVVVVMLSIAW), 35–55 (FINATLTVIGLNLALLSLYFV), 75–95 (FYIGLVIVASLATSTFAYPWL), 104–124 (EFYLLVLIATMGGILLASANH), 125–145 (LASLFLGIELISLPLFGLIGY), 159–179 (YMLLSAAASSFLLFGMALLYA), 203–223 (ILAGLGMMIVGLGFKLSLVPF), 235–255 (PAPVSTFLATASKIAIFAVVM), 271–291 (LVLSLIAVASILFGNLMAISQ), 297–317 (LLGYSSIAHLGYLLIALVAVQ), 327–347 (GVYLAGYLFSSLGAFGVVSLM), 374–394 (AVMTVMMLSLAGIPMTLGFIG), 408–427 (WWLTGAVVLGSAIGLYYYLR), and 449–469 (ALTAGGVVVLISAILVLVLGI).

Belongs to the complex I subunit 2 family. As to quaternary structure, NDH-1 is composed of 13 different subunits. Subunits NuoA, H, J, K, L, M, N constitute the membrane sector of the complex.

Its subcellular location is the cell inner membrane. It catalyses the reaction a quinone + NADH + 5 H(+)(in) = a quinol + NAD(+) + 4 H(+)(out). Its function is as follows. NDH-1 shuttles electrons from NADH, via FMN and iron-sulfur (Fe-S) centers, to quinones in the respiratory chain. The immediate electron acceptor for the enzyme in this species is believed to be ubiquinone. Couples the redox reaction to proton translocation (for every two electrons transferred, four hydrogen ions are translocated across the cytoplasmic membrane), and thus conserves the redox energy in a proton gradient. In Yersinia enterocolitica serotype O:8 / biotype 1B (strain NCTC 13174 / 8081), this protein is NADH-quinone oxidoreductase subunit N.